The primary structure comprises 311 residues: Coproporphyrin III ferrochelatase 1 (311 aa).

Fe-coproporphyrin III is bound by residues Tyr12, Arg29, 45–46, Ser53, and Tyr124; that span reads RY. The Fe(2+) site is built by His182 and Glu263.

The protein belongs to the ferrochelatase family.

The protein localises to the cytoplasm. The enzyme catalyses Fe-coproporphyrin III + 2 H(+) = coproporphyrin III + Fe(2+). It participates in porphyrin-containing compound metabolism; protoheme biosynthesis. Functionally, involved in coproporphyrin-dependent heme b biosynthesis. Catalyzes the insertion of ferrous iron into coproporphyrin III to form Fe-coproporphyrin III. The sequence is that of Coproporphyrin III ferrochelatase 1 from Bacillus anthracis.